The following is a 496-amino-acid chain: MDISISWVVIILLVLSYLILMEKWRAAKLPKNLPPGPPKLPVIGHLHLLGGGLPQHVLRGITQKYGPVAHVQLGEVSSVVLSSTEAARQAMKVLDPAFADRFVNIGSRIMWYDSEDIIFSRYNDHWRQIRKICVSELLSPKNVKSFGYIRQDEMARLIRLFESSEGAAINVSEEISKTVCTIVSRVAFGSVVKDQSLLLNLVKESLRMASGFELADLFPSSWLLNLLCFNKYRLWGMRRRLDNFLDGFLEEHRVKKSGEYGGEDIIDVLYRMQKDSQMKVPITNNGIKGFIYDVFSAGTDTSAATILWALSELMRNPEKMAKAQAEVREILKGKTNVDMAEVHELKYLRSVVKEALRLHPPFPIIPRLCIQESEVTGYTIPANTRILINVWSIGRDPLYWNEPDTFNPDRYDEVPRDIIGNDFELIPFGSGRRICPGLHFGLANIEVPLAQLLYHFDWKLPQGMTAADIDMTEKPGLSGPRKNPLILVPTIHNPTS.

The chain crosses the membrane as a helical; Signal-anchor for type II membrane protein span at residues 1 to 21; sequence MDISISWVVIILLVLSYLILM. C435 serves as a coordination point for heme.

It belongs to the cytochrome P450 family. Heme is required as a cofactor. Expressed in flowers, leaves and stems, especially in glandular trichomes.

The protein resides in the membrane. The enzyme catalyses (4S)-limonene + reduced [NADPH--hemoprotein reductase] + O2 = (1S,5R)-carveol + oxidized [NADPH--hemoprotein reductase] + H2O + H(+). The catalysed reaction is gamma-terpinene + 2 reduced [NADPH--hemoprotein reductase] + 2 O2 = carvacrol + 2 oxidized [NADPH--hemoprotein reductase] + 3 H2O + 2 H(+). It carries out the reaction gamma-terpinene + 2 reduced [NADPH--hemoprotein reductase] + 2 O2 = thymol + 2 oxidized [NADPH--hemoprotein reductase] + 3 H2O + 2 H(+). It catalyses the reaction (4R)-limonene + reduced [NADPH--hemoprotein reductase] + O2 = (1R,6S)-isopiperitenol + oxidized [NADPH--hemoprotein reductase] + H2O + H(+). Its pathway is secondary metabolite biosynthesis; terpenoid biosynthesis. Involved in the biosynthesis of phenolic monoterpenes natural products thymol and carvacrol which have a broad range of biological activities acting as antimicrobial compounds, insecticides, antioxidants and pharmaceutical agents. Catalyzes the C2- and C3-hydroxylation of gamma-terpinene to produce carvacrol and thymol, respectively. Also mediates the C6-hydroxylation of (4S)-limonene to form carveol and the C3-hydroxylation of (4R)-limonene to generate (+)-trans-isopiperitenol. The protein is Cytochrome P450 71D178 of Origanum vulgare (Wild marjoram).